The primary structure comprises 186 residues: Threonylcarbamoyl-AMP synthase (186 aa).

One can recognise a YrdC-like domain in the interval 2-186 (STEFEQAVAA…ARTGAVIRPS (185 aa)).

It belongs to the SUA5 family. TsaC subfamily.

Its subcellular location is the cytoplasm. The enzyme catalyses L-threonine + hydrogencarbonate + ATP = L-threonylcarbamoyladenylate + diphosphate + H2O. Its function is as follows. Required for the formation of a threonylcarbamoyl group on adenosine at position 37 (t(6)A37) in tRNAs that read codons beginning with adenine. Catalyzes the conversion of L-threonine, HCO(3)(-)/CO(2) and ATP to give threonylcarbamoyl-AMP (TC-AMP) as the acyladenylate intermediate, with the release of diphosphate. The sequence is that of Threonylcarbamoyl-AMP synthase from Aeromonas salmonicida (strain A449).